Reading from the N-terminus, the 250-residue chain is 2,3-bisphosphoglycerate-dependent phosphoglycerate mutase (250 aa).

Residues 10 to 17 (RHGESQWN), 23 to 24 (TG), Arg-62, 89 to 92 (ERHY), Lys-100, 116 to 117 (RR), and 185 to 186 (GN) contribute to the substrate site. The active-site Tele-phosphohistidine intermediate is His-11. Residue Glu-89 is the Proton donor/acceptor of the active site.

The protein belongs to the phosphoglycerate mutase family. BPG-dependent PGAM subfamily. Homodimer.

The enzyme catalyses (2R)-2-phosphoglycerate = (2R)-3-phosphoglycerate. It participates in carbohydrate degradation; glycolysis; pyruvate from D-glyceraldehyde 3-phosphate: step 3/5. Its function is as follows. Catalyzes the interconversion of 2-phosphoglycerate and 3-phosphoglycerate. The protein is 2,3-bisphosphoglycerate-dependent phosphoglycerate mutase of Klebsiella pneumoniae (strain 342).